The chain runs to 647 residues: LIM domain kinase 1 (647 aa).

2 LIM zinc-binding domains span residues 25-75 (CASC…CKKD) and 84-137 (CHGC…CGQC). The region spanning 165 to 258 (LVSIPASAHG…LLQLTLEHDP (94 aa)) is the PDZ domain. S210 is modified (phosphoserine). A Phosphothreonine modification is found at T229. A disordered region spans residues 256–316 (HDPHDSLGHG…SLVSPASQRK (61 aa)). Residues 278-289 (HTPSGQAGSSAR) show a composition bias toward polar residues. Phosphoserine is present on residues S298, S302, S307, and S310. The residue at position 323 (S323) is a Phosphoserine; by MAPKAPK2. S337 carries the post-translational modification Phosphoserine. The 266-residue stretch at 339–604 (LIHGEVLGKG…PSFVKLEQWL (266 aa)) folds into the Protein kinase domain. ATP is bound by residues 345–353 (LGKGCFGQA) and K368. Residue D460 is part of the active site. T508 is subject to Phosphothreonine; by ROCK1 and PAK1.

This sequence belongs to the protein kinase superfamily. TKL Ser/Thr protein kinase family. In terms of assembly, interacts (via LIM domain) with the cytoplasmic domain of NRG1. Interacts with NISCH. Interacts with RLIM and RNF6. Self-associates to form homodimers. Interacts with HSP90AA1; this interaction promotes LIMK1 dimerization and subsequent transphosphorylation. Interacts with CDKN1C. Interacts with SSH1. Interacts with ROCK1. Interacts (via LIM zinc-binding domains) with FAM89B/LRAP25 (via LRR repeat). Forms a tripartite complex with CDC42BPA, CDC42BPB and FAM89B/LRAP25. Post-translationally, autophosphorylated. Phosphorylated on Thr-508 by ROCK1 and PAK1, resulting in activation. Phosphorylated by PAK4 which increases the ability of LIMK1 to phosphorylate cofilin. Phosphorylated at Ser-323 by MAPKAPK2 during activation of VEGFA-induced signaling, which results in activation of LIMK1 and promotion of actin reorganization, cell migration, and tubule formation of endothelial cells. Dephosphorylated and inactivated by SSH1. Phosphorylated by CDC42BP. In terms of processing, ubiquitinated. 'Lys-48'-linked polyubiquitination by RNF6 leads to proteasomal degradation through the 26S proteasome, modulating LIMK1 levels in the growth cone and its effect on axonal outgrowth. Also polyubiquitinated by RLIM.

The protein localises to the cytoplasm. It localises to the nucleus. It is found in the cytoskeleton. The protein resides in the cell projection. Its subcellular location is the lamellipodium. It catalyses the reaction L-seryl-[protein] + ATP = O-phospho-L-seryl-[protein] + ADP + H(+). The catalysed reaction is L-threonyl-[protein] + ATP = O-phospho-L-threonyl-[protein] + ADP + H(+). Serine/threonine-protein kinase that plays an essential role in the regulation of actin filament dynamics. Acts downstream of several Rho family GTPase signal transduction pathways. Activated by upstream kinases including ROCK1, PAK1 and PAK4, which phosphorylate LIMK1 on a threonine residue located in its activation loop. LIMK1 subsequently phosphorylates and inactivates the actin binding/depolymerizing factors cofilin-1/CFL1, cofilin-2/CFL2 and destrin/DSTN, thereby preventing the cleavage of filamentous actin (F-actin), and stabilizing the actin cytoskeleton. In this way LIMK1 regulates several actin-dependent biological processes including cell motility, cell cycle progression, and differentiation. Phosphorylates TPPP on serine residues, thereby promoting microtubule disassembly. Stimulates axonal outgrowth and may be involved in brain development. This chain is LIM domain kinase 1 (Limk1), found in Rattus norvegicus (Rat).